A 356-amino-acid polypeptide reads, in one-letter code: Histidinol-phosphate aminotransferase (356 aa).

Lysine 214 is subject to N6-(pyridoxal phosphate)lysine.

Belongs to the class-II pyridoxal-phosphate-dependent aminotransferase family. Histidinol-phosphate aminotransferase subfamily. Homodimer. It depends on pyridoxal 5'-phosphate as a cofactor.

It carries out the reaction L-histidinol phosphate + 2-oxoglutarate = 3-(imidazol-4-yl)-2-oxopropyl phosphate + L-glutamate. It participates in amino-acid biosynthesis; L-histidine biosynthesis; L-histidine from 5-phospho-alpha-D-ribose 1-diphosphate: step 7/9. In Shigella boydii serotype 18 (strain CDC 3083-94 / BS512), this protein is Histidinol-phosphate aminotransferase.